The following is a 332-amino-acid chain: Glycerol-3-phosphate dehydrogenase [NAD(P)+] (332 aa).

Positions 11, 12, 32, and 106 each coordinate NADPH. K106, G134, and S136 together coordinate sn-glycerol 3-phosphate. A138 is an NADPH binding site. 5 residues coordinate sn-glycerol 3-phosphate: K189, D242, S252, R253, and N254. K189 acts as the Proton acceptor in catalysis. R253 is an NADPH binding site. The NADPH site is built by V277 and E279.

The protein belongs to the NAD-dependent glycerol-3-phosphate dehydrogenase family.

The protein resides in the cytoplasm. It catalyses the reaction sn-glycerol 3-phosphate + NAD(+) = dihydroxyacetone phosphate + NADH + H(+). The enzyme catalyses sn-glycerol 3-phosphate + NADP(+) = dihydroxyacetone phosphate + NADPH + H(+). Its pathway is membrane lipid metabolism; glycerophospholipid metabolism. Its function is as follows. Catalyzes the reduction of the glycolytic intermediate dihydroxyacetone phosphate (DHAP) to sn-glycerol 3-phosphate (G3P), the key precursor for phospholipid synthesis. The protein is Glycerol-3-phosphate dehydrogenase [NAD(P)+] of Clostridium acetobutylicum (strain ATCC 824 / DSM 792 / JCM 1419 / IAM 19013 / LMG 5710 / NBRC 13948 / NRRL B-527 / VKM B-1787 / 2291 / W).